Consider the following 97-residue polypeptide: Mitochondrial import inner membrane translocase subunit Tim8 A (97 aa).

A Twin CX3C motif motif is present at residues 43-66; that stretch reads CWEKCMDKPGPKLDSRAEACFVNC. 2 disulfide bridges follow: cysteine 43-cysteine 66 and cysteine 47-cysteine 62. A phosphoserine mark is found at serine 57, serine 87, serine 94, and serine 96.

It belongs to the small Tim family. As to quaternary structure, heterohexamer; composed of 3 copies of TIMM8A and 3 copies of TIMM13, named soluble 70 kDa complex. Associates with the TIM22 complex, whose core is composed of TIMM22.

The protein localises to the mitochondrion inner membrane. Mitochondrial intermembrane chaperone that participates in the import and insertion of some multi-pass transmembrane proteins into the mitochondrial inner membrane. Also required for the transfer of beta-barrel precursors from the TOM complex to the sorting and assembly machinery (SAM complex) of the outer membrane. Acts as a chaperone-like protein that protects the hydrophobic precursors from aggregation and guide them through the mitochondrial intermembrane space. The TIMM8-TIMM13 complex mediates the import of proteins such as TIMM23, SLC25A12/ARALAR1 and SLC25A13/ARALAR2, while the predominant TIMM9-TIMM10 70 kDa complex mediates the import of much more proteins. This chain is Mitochondrial import inner membrane translocase subunit Tim8 A (TIMM8A), found in Bos taurus (Bovine).